The following is a 488-amino-acid chain: Sucrose phosphorylase (488 aa).

Residues Asp-50, His-88, 191 to 193 (RLD), Glu-233, 290 to 291 (HD), 341 to 344 (DLYQ), and Arg-398 each bind sucrose. Asp-193 acts as the Nucleophile in catalysis. Glu-233 acts as the Proton donor in catalysis.

It belongs to the glycosyl hydrolase 13 family. Sucrose phosphorylase subfamily.

The enzyme catalyses sucrose + phosphate = D-fructose + alpha-D-glucose 1-phosphate. This is Sucrose phosphorylase from Agrobacterium vitis (Rhizobium vitis).